Reading from the N-terminus, the 284-residue chain is Nucleotide-binding protein Sbal195_0713 (284 aa).

Residue 8 to 15 (GRSGSGKS) participates in ATP binding. Position 56–59 (56–59 (DVRN)) interacts with GTP.

It belongs to the RapZ-like family.

Functionally, displays ATPase and GTPase activities. The chain is Nucleotide-binding protein Sbal195_0713 from Shewanella baltica (strain OS195).